The chain runs to 479 residues: Anaerobic nitric oxide reductase flavorubredoxin (479 aa).

Positions 30-210 are zinc metallo-hydrolase; that stretch reads LRGSSYNSYL…PFSRLVTPKI (181 aa). Positions 79, 81, 83, 147, 166, and 227 each coordinate Fe cation. The Flavodoxin-like domain maps to 254 to 393; the sequence is ITIFYDTMSN…LCREHGREIA (140 aa). Residues 260–264 and 342–369 contribute to the FMN site; these read TMSNN and AFGS…EMSL. Residues 423-479 form the Rubredoxin-like domain; that stretch reads GPRMQCSVCQWIYDPAKGEPMQDVAPGTPWSEVPDNFLCPECSLGKDVFEELASEAK. Residues Cys428, Cys431, Cys461, and Cys464 each coordinate Fe cation.

This sequence in the N-terminal section; belongs to the zinc metallo-hydrolase group 3 family. Homotetramer. The cofactor is Fe cation. FMN is required as a cofactor.

It is found in the cytoplasm. It functions in the pathway nitrogen metabolism; nitric oxide reduction. Its function is as follows. Anaerobic nitric oxide reductase; uses NADH to detoxify nitric oxide (NO), protecting several 4Fe-4S NO-sensitive enzymes. Has at least 2 reductase partners, only one of which (NorW, flavorubredoxin reductase) has been identified. NO probably binds to the di-iron center; electrons enter from the reductase at rubredoxin and are transferred sequentially to the FMN center and the di-iron center. Also able to function as an aerobic oxygen reductase. The sequence is that of Anaerobic nitric oxide reductase flavorubredoxin (norV) from Escherichia coli (strain K12 / DH10B).